The following is a 311-amino-acid chain: Catechol 1,2-dioxygenase (311 aa).

Residue Tyr-164 coordinates catechol. 4 residues coordinate Fe cation: Tyr-164, Tyr-200, His-224, and His-226. 224-226 (HIH) lines the catechol pocket.

The protein belongs to the intradiol ring-cleavage dioxygenase family. Homodimer. Requires Fe(3+) as cofactor.

The enzyme catalyses catechol + O2 = cis,cis-muconate + 2 H(+). The protein operates within aromatic compound metabolism; beta-ketoadipate pathway; 5-oxo-4,5-dihydro-2-furylacetate from catechol: step 1/3. This Acinetobacter baylyi (strain ATCC 33305 / BD413 / ADP1) protein is Catechol 1,2-dioxygenase.